Reading from the N-terminus, the 1043-residue chain is MRRFKRKHLTAIDCQHLARSHLAVTQPFGQRWTNRDPNHGLYPKPRTKRGSRGQGSQRCIPEFFLAGKQPCTNDMAKSNSVGQDSCQDSEGDMIFPAESSCALPQEGSAGPGSPGSAPPSRKRSWSSEEESNQATGTSRWDGVSKKAPRHHLSVPCTRPREARQEAEDSTSRLSAESGETDQDAGDVGPDPIPDSYYGLLGTLPCQEALSHICSLPSEVLRHVFAFLPVEDLYWNLSLVCHLWREIISDPLFIPWKKLYHRYLMNEEQAVSKVDGILSNCGIEKESDLCVLNLIRYTATTKCSPSVDPERVLWSLRDHPLLPEAEACVRQHLPDLYAAAGGVNIWALVAAVVLLSSSVNDIQRLLFCLRRPSSTVTMPDVTETLYCIAVLLYAMREKGINISNRIHYNIFYCLYLQENSCTQATKVKEEPSVWPGKKTIQLTHEQQLILNHKMEPLQVVKIMAFAGTGKTSTLVKYAEKWSQSRFLYVTFNKSIAKQAERVFPSNVICKTFHSMAYGHIGRKYQSKKKLNLFKLTPFMVNSVLAEGKGGFIRAKLVCKTLENFFASADEELTIDHVPIWCKNSQGQRVMVEQSEKLNGVLEASRLWDNMRKLGECTEEAHQMTHDGYLKLWQLSKPSLASFDAIFVDEAQDCTPAIMNIVLSQPCGKIFVGDPHQQIYTFRGAVNALFTVPHTHVFYLTQSFRFGVEIAYVGATILDVCKRVRKKTLVGGNHQSGIRGDAKGQVALLSRTNANVFDEAVRVTEGEFPSRIHLIGGIKSFGLDRIIDIWILLQPEEERRKQNLVIKDKFIRRWVHKEGFSGFKRYVTAAEDKELEAKIAVVEKYNIRIPELVQRIEKCHIEDLDFAEYILGTVHKAKGLEFDTVHVLDDFVKVPCARHNLPQLPHFRVESFSEDEWNLLYVAVTRAKKRLIMTKSLENILTLAGEYFLQAELTSNVLKTGVVRCCVGQCNNAIPVDTVLTMKKLPITYSNRKENKGGYLCHSCAEQRIGPLAFLTASPEQVRAMERTVENIVLPRHEALLFLVF.

The segment at Q30 to S56 is disordered. A PIP-box motif is present at residues Q57 to F64. A disordered region spans residues C101–P191. S124 is subject to Phosphoserine. The F-box domain maps to S138 to A184. Residues R158 to T170 show a composition bias toward basic and acidic residues. The UvrD-like helicase ATP-binding domain occupies T442–G705. A463 to T470 provides a ligand contact to ATP. An APIM motif motif is present at residues K807 to R811.

Belongs to the helicase family. UvrD subfamily. As to quaternary structure, part of the SCF (SKP1-CUL1-F-box) E3 ubiquitin-protein ligase complex SCF(FBH1) composed of CUL1, SKP1, RBX1 and FBH1. Interacts with RAD51. Interacts with RPA2. Interacts (via PIP-box and RanBP2-type zinc finger) with PCNA. Post-translationally, ubiquitinated. Ubiquitination by the DCX(DTL) complex, also named CRL4(CDT2), leading to its degradation: ubiquitination takes place after its localization to DNA damage sites, possibly to facilitate the translesion synthesis (TLS) pathway.

Its subcellular location is the nucleus. The protein resides in the chromosome. The enzyme catalyses Couples ATP hydrolysis with the unwinding of duplex DNA by translocating in the 3'-5' direction.. It carries out the reaction ATP + H2O = ADP + phosphate + H(+). Its pathway is protein modification; protein ubiquitination. 3'-5' DNA helicase and substrate-recognition component of the SCF(FBH1) E3 ubiquitin ligase complex that plays a key role in response to stalled/damaged replication forks. Involved in genome maintenance by acting as an anti-recombinogenic helicase and preventing extensive strand exchange during homologous recombination: promotes RAD51 filament dissolution from stalled forks, thereby inhibiting homologous recombination and preventing excessive recombination. Also promotes cell death and DNA double-strand breakage in response to replication stress: together with MUS81, promotes the endonucleolytic DNA cleavage following prolonged replication stress via its helicase activity, possibly to eliminate cells with excessive replication stress. Plays a major role in remodeling of stalled DNA forks by catalyzing fork regression, in which the fork reverses and the two nascent DNA strands anneal. In addition to the helicase activity, also acts as the substrate-recognition component of the SCF(FBH1) E3 ubiquitin ligase complex, a complex that mediates ubiquitination of RAD51, leading to regulate RAD51 subcellular location. This chain is F-box DNA helicase 1, found in Homo sapiens (Human).